A 493-amino-acid chain; its full sequence is Galactose-1-phosphate uridylyltransferase (493 aa).

It belongs to the galactose-1-phosphate uridylyltransferase type 2 family.

Its subcellular location is the cytoplasm. It catalyses the reaction alpha-D-galactose 1-phosphate + UDP-alpha-D-glucose = alpha-D-glucose 1-phosphate + UDP-alpha-D-galactose. It participates in carbohydrate metabolism; galactose metabolism. In Streptococcus thermophilus (strain ATCC BAA-250 / LMG 18311), this protein is Galactose-1-phosphate uridylyltransferase.